Consider the following 244-residue polypeptide: Protein DMP9 (244 aa).

The segment at 1 to 56 is disordered; it reads MEKTEESVGIRVYTATPPQKPSPSPPSRSPKPVLISSLPSLPSGAAAGGGRGRKRR. Residues 18–29 show a composition bias toward pro residues; it reads PQKPSPSPPSRS. The span at 30–45 shows a compositional bias: low complexity; that stretch reads PKPVLISSLPSLPSGA. Transmembrane regions (helical) follow at residues 71–91, 99–119, 173–193, and 213–233; these read MLVN…LPSI, GINT…CFFF, LTVN…AIAF, and VMES…LVFP.

Belongs to the plant DMP1 protein family. As to expression, restricted to flowers and pollen.

The protein resides in the endoplasmic reticulum membrane. It is found in the vacuole membrane. Functionally, involved in membrane remodeling. This chain is Protein DMP9, found in Arabidopsis thaliana (Mouse-ear cress).